The following is a 470-amino-acid chain: Chromosomal replication initiator protein DnaA (470 aa).

The tract at residues 1 to 79 (MTDDTWGLLR…AVQRLAFKVA (79 aa)) is domain I, interacts with DnaA modulators. Residues 79–128 (AANSPTRPVQPTMSEAIEEPAPLQTTVVDQLGNQEGNTSVKSPPEDLQAA) are domain II. The interval 129–350 (PLDPRFTFDS…GALTRLFAFA (222 aa)) is domain III, AAA+ region. Gly173, Gly175, Lys176, and Thr177 together coordinate ATP. The segment at 351 to 470 (SLVGREIDMD…VEMLRRSLEA (120 aa)) is domain IV, binds dsDNA.

This sequence belongs to the DnaA family. As to quaternary structure, oligomerizes as a right-handed, spiral filament on DNA at oriC.

The protein resides in the cytoplasm. In terms of biological role, plays an essential role in the initiation and regulation of chromosomal replication. ATP-DnaA binds to the origin of replication (oriC) to initiate formation of the DNA replication initiation complex once per cell cycle. Binds the DnaA box (a 9 base pair repeat at the origin) and separates the double-stranded (ds)DNA. Forms a right-handed helical filament on oriC DNA; dsDNA binds to the exterior of the filament while single-stranded (ss)DNA is stabiized in the filament's interior. The ATP-DnaA-oriC complex binds and stabilizes one strand of the AT-rich DNA unwinding element (DUE), permitting loading of DNA polymerase. After initiation quickly degrades to an ADP-DnaA complex that is not apt for DNA replication. Binds acidic phospholipids. This chain is Chromosomal replication initiator protein DnaA, found in Ruegeria sp. (strain TM1040) (Silicibacter sp.).